Here is a 358-residue protein sequence, read N- to C-terminus: Phospho-N-acetylmuramoyl-pentapeptide-transferase (358 aa).

The next 10 membrane-spanning stretches (helical) occupy residues 26–46, 70–90, 94–114, 134–154, 169–189, 197–217, 234–254, 261–281, 286–306, and 335–355; these read AIYATITALMIAFILGPWLID, GTPTMGGTLILLAIVLPTLLW, TNVYVWVTLLVTVGFGAVGFV, MLWLMLIAGTAGVMLYSYPPF, ELGLFYIPFAVLVIVGASNAV, GLAIGPTIIASGTYLLFAYLA, AGELAVLCGAMVGAGLGFLWF, VFMGDVGSLSLGGALGTIAVI, IVLVIVGGIFVVEALSVIVQV, and KIIVRFWIISIILALVALSTL.

The protein belongs to the glycosyltransferase 4 family. MraY subfamily. The cofactor is Mg(2+).

It is found in the cell inner membrane. The catalysed reaction is UDP-N-acetyl-alpha-D-muramoyl-L-alanyl-gamma-D-glutamyl-meso-2,6-diaminopimeloyl-D-alanyl-D-alanine + di-trans,octa-cis-undecaprenyl phosphate = di-trans,octa-cis-undecaprenyl diphospho-N-acetyl-alpha-D-muramoyl-L-alanyl-D-glutamyl-meso-2,6-diaminopimeloyl-D-alanyl-D-alanine + UMP. The protein operates within cell wall biogenesis; peptidoglycan biosynthesis. In terms of biological role, catalyzes the initial step of the lipid cycle reactions in the biosynthesis of the cell wall peptidoglycan: transfers peptidoglycan precursor phospho-MurNAc-pentapeptide from UDP-MurNAc-pentapeptide onto the lipid carrier undecaprenyl phosphate, yielding undecaprenyl-pyrophosphoryl-MurNAc-pentapeptide, known as lipid I. This Syntrophotalea carbinolica (strain DSM 2380 / NBRC 103641 / GraBd1) (Pelobacter carbinolicus) protein is Phospho-N-acetylmuramoyl-pentapeptide-transferase.